A 238-amino-acid polypeptide reads, in one-letter code: Uridylate kinase (238 aa).

12 to 15 (KLSG) lines the ATP pocket. Residue Gly54 participates in UMP binding. 2 residues coordinate ATP: Gly55 and Arg59. UMP contacts are provided by residues Asp74 and 135–142 (TGNPYFTT). Residues Thr162, Tyr168, and Asp171 each coordinate ATP.

Belongs to the UMP kinase family. In terms of assembly, homohexamer.

It localises to the cytoplasm. The enzyme catalyses UMP + ATP = UDP + ADP. Its pathway is pyrimidine metabolism; CTP biosynthesis via de novo pathway; UDP from UMP (UMPK route): step 1/1. Its activity is regulated as follows. Inhibited by UTP. In terms of biological role, catalyzes the reversible phosphorylation of UMP to UDP. In Lawsonia intracellularis (strain PHE/MN1-00), this protein is Uridylate kinase.